Consider the following 94-residue polypeptide: Probable Fe(2+)-trafficking protein (94 aa).

Belongs to the Fe(2+)-trafficking protein family.

In terms of biological role, could be a mediator in iron transactions between iron acquisition and iron-requiring processes, such as synthesis and/or repair of Fe-S clusters in biosynthetic enzymes. This Alcanivorax borkumensis (strain ATCC 700651 / DSM 11573 / NCIMB 13689 / SK2) protein is Probable Fe(2+)-trafficking protein.